We begin with the raw amino-acid sequence, 305 residues long: NAD kinase 2 (305 aa).

Residue D78 is the Proton acceptor of the active site. NAD(+) is bound by residues 78–79 (DG), 152–153 (NE), D182, 193–198 (TAYSLS), and N251.

Belongs to the NAD kinase family. A divalent metal cation serves as cofactor.

The protein resides in the cytoplasm. It catalyses the reaction NAD(+) + ATP = ADP + NADP(+) + H(+). Involved in the regulation of the intracellular balance of NAD and NADP, and is a key enzyme in the biosynthesis of NADP. Catalyzes specifically the phosphorylation on 2'-hydroxyl of the adenosine moiety of NAD to yield NADP. Functions as a growth repressor under light-activated heterotrophic growth conditions and light and dark cycle conditions in the presence of glucose. NADP(H)/NAD(H) maintenance by slr0400 probably plays a significant role in modulating glycolysis and the TCA cycle to repress the growth rate and maintain the photosynthetic capacity. The polypeptide is NAD kinase 2 (Synechocystis sp. (strain ATCC 27184 / PCC 6803 / Kazusa)).